The primary structure comprises 106 residues: Somatoliberin (106 aa).

Residues methionine 1–glycine 19 form the signal peptide. Residues serine 20–arginine 30 constitute a propeptide that is removed on maturation. The residue at position 74 (leucine 74) is a Leucine amide. A propeptide spanning residues glutamine 77–glycine 106 is cleaved from the precursor.

This sequence belongs to the glucagon family.

It localises to the secreted. GRF is released by the hypothalamus and acts on the adenohypophyse to stimulate the secretion of growth hormone. This is Somatoliberin (GHRH) from Bos taurus (Bovine).